The sequence spans 168 residues: G/U mismatch-specific DNA glycosylase (168 aa).

This sequence belongs to the uracil-DNA glycosylase (UDG) superfamily. TDG/mug family. In terms of assembly, binds DNA as a monomer.

It is found in the cytoplasm. The catalysed reaction is Specifically hydrolyzes mismatched double-stranded DNA and polynucleotides, releasing free uracil.. Its function is as follows. Excises ethenocytosine and uracil, which can arise by alkylation or deamination of cytosine, respectively, from the corresponding mispairs with guanine in ds-DNA. It is capable of hydrolyzing the carbon-nitrogen bond between the sugar-phosphate backbone of the DNA and the mispaired base. The complementary strand guanine functions in substrate recognition. Required for DNA damage lesion repair in stationary-phase cells. This is G/U mismatch-specific DNA glycosylase from Salmonella choleraesuis (strain SC-B67).